The primary structure comprises 747 residues: Elongation factor G, mitochondrial (747 aa).

A mitochondrion-targeting transit peptide spans 1–32; sequence MTLITRVLNSNLPLRLSALKTVRQLQCGYSSH. The tr-type G domain occupies 42-319; that stretch reads ERIRNIGISA…AIIDYLPNPG (278 aa). Residues 51-58, 118-122, and 172-175 contribute to the GTP site; these read AHIDSGKT, DTPGH, and NKLD.

It belongs to the TRAFAC class translation factor GTPase superfamily. Classic translation factor GTPase family. EF-G/EF-2 subfamily.

It localises to the mitochondrion. It participates in protein biosynthesis; polypeptide chain elongation. Its function is as follows. Mitochondrial GTPase that catalyzes the GTP-dependent ribosomal translocation step during translation elongation. During this step, the ribosome changes from the pre-translocational (PRE) to the post-translocational (POST) state as the newly formed A-site-bound peptidyl-tRNA and P-site-bound deacylated tRNA move to the P and E sites, respectively. Catalyzes the coordinated movement of the two tRNA molecules, the mRNA and conformational changes in the ribosome. Essential during development as it acts as a retrograde signal from mitochondria to the nucleus to slow down cell proliferation if mitochondrial energy output is low. The protein is Elongation factor G, mitochondrial of Drosophila virilis (Fruit fly).